We begin with the raw amino-acid sequence, 456 residues long: Bifunctional protein GlmU (456 aa).

Residues 1-229 are pyrophosphorylase; sequence MLNNAMSVVI…LSEVEGVNNR (229 aa). UDP-N-acetyl-alpha-D-glucosamine-binding positions include 11 to 14, Lys25, Gln76, 81 to 82, 103 to 105, Gly140, Glu154, Asn169, and Asn227; these read LAAG, GT, and YGD. Asp105 is a binding site for Mg(2+). Residue Asn227 participates in Mg(2+) binding. The interval 230 to 250 is linker; that stretch reads LQLSRLERVYQSEQAEKLLLA. An N-acetyltransferase region spans residues 251-456; that stretch reads GVMLRDPARF…EGWRRPVKKK (206 aa). UDP-N-acetyl-alpha-D-glucosamine is bound by residues Arg333 and Lys351. Residue His363 is the Proton acceptor of the active site. Positions 366 and 377 each coordinate UDP-N-acetyl-alpha-D-glucosamine. Residues Ala380, 386 to 387, Ser405, Ala423, and Arg440 contribute to the acetyl-CoA site; that span reads NY.

This sequence in the N-terminal section; belongs to the N-acetylglucosamine-1-phosphate uridyltransferase family. It in the C-terminal section; belongs to the transferase hexapeptide repeat family. As to quaternary structure, homotrimer. Requires Mg(2+) as cofactor.

The protein resides in the cytoplasm. It catalyses the reaction alpha-D-glucosamine 1-phosphate + acetyl-CoA = N-acetyl-alpha-D-glucosamine 1-phosphate + CoA + H(+). The catalysed reaction is N-acetyl-alpha-D-glucosamine 1-phosphate + UTP + H(+) = UDP-N-acetyl-alpha-D-glucosamine + diphosphate. It functions in the pathway nucleotide-sugar biosynthesis; UDP-N-acetyl-alpha-D-glucosamine biosynthesis; N-acetyl-alpha-D-glucosamine 1-phosphate from alpha-D-glucosamine 6-phosphate (route II): step 2/2. Its pathway is nucleotide-sugar biosynthesis; UDP-N-acetyl-alpha-D-glucosamine biosynthesis; UDP-N-acetyl-alpha-D-glucosamine from N-acetyl-alpha-D-glucosamine 1-phosphate: step 1/1. It participates in bacterial outer membrane biogenesis; LPS lipid A biosynthesis. Its function is as follows. Catalyzes the last two sequential reactions in the de novo biosynthetic pathway for UDP-N-acetylglucosamine (UDP-GlcNAc). The C-terminal domain catalyzes the transfer of acetyl group from acetyl coenzyme A to glucosamine-1-phosphate (GlcN-1-P) to produce N-acetylglucosamine-1-phosphate (GlcNAc-1-P), which is converted into UDP-GlcNAc by the transfer of uridine 5-monophosphate (from uridine 5-triphosphate), a reaction catalyzed by the N-terminal domain. This Escherichia coli O8 (strain IAI1) protein is Bifunctional protein GlmU.